The chain runs to 617 residues: uncharacterized protein (617 aa).

Low complexity-rich tracts occupy residues 1–16 and 36–45; these read MSKCATPTPSTSSNSS and STTSSNGSNS. A disordered region spans residues 1 to 49; that stretch reads MSKCATPTPSTSSNSSDEAKRSPQPMSRGFPQRNMSTTSSNGSNSPRHR. 3 helical membrane-spanning segments follow: residues 219-239, 262-282, and 427-447; these read LMIGAAGGVGGVLIGLTGGLA, TAGAAVLGTTMGVAGAGFTGY, and PITLIGFSLGARVIFHCLLTM.

This sequence belongs to the TMCO4 family.

The protein localises to the membrane. This is an uncharacterized protein from Caenorhabditis elegans.